The chain runs to 200 residues: NAD(P)H dehydrogenase (quinone) (200 aa).

The region spanning 4-191 (VLVLYYSSYG…DIARYQGKHV (188 aa)) is the Flavodoxin-like domain. Residues 10 to 15 (SSYGHV) and 79 to 81 (TRF) contribute to the FMN site. An NAD(+)-binding site is contributed by tyrosine 12. Substrate is bound at residue tryptophan 99. FMN-binding positions include 114-120 (STGTQHG) and histidine 135.

The protein belongs to the WrbA family. FMN serves as cofactor.

It catalyses the reaction a quinone + NADH + H(+) = a quinol + NAD(+). The catalysed reaction is a quinone + NADPH + H(+) = a quinol + NADP(+). The chain is NAD(P)H dehydrogenase (quinone) from Burkholderia cenocepacia (strain HI2424).